The sequence spans 287 residues: mRNA-capping enzyme regulatory subunit (287 aa).

It belongs to the chordopoxvirinae mRNA-capping enzyme regulatory subunit family. Heterodimer of a catalytic and a regulatory subunit. Intrinsic methyltransferase activity of the catalytic subunit is weak and needs to be stimulated 30- to 50-fold by the regulatory subunit, which is itself catalytically inert.

Its subcellular location is the virion. Functionally, regulatory subunit of the mRNA cap enzyme which stabilizes the catalytic subunit and enhances its methyltransferase activity through an allosteric mechanism. Heterodimeric mRNA capping enzyme catalyzes the linkage of a N7-methyl-guanosine moiety to the first transcribed nucleotide (cap 0 structure), whereas the polymerase associated VP39 is responsible for a second methylation at the 2'-O position of the ribose (cap 1 structure). The heterodimeric enzyme is also involved in early viral gene transcription termination and intermediate viral gene transcription initiation. Early gene transcription termination requires the termination factor VTF, the DNA-dependent ATPase NPH-I and the Rap94 subunit of the viral RNA polymerase, as well as the presence of a specific termination motif. Binds, together with RAP94, to the termination motif 5'-UUUUUNU-3' in the nascent early mRNA. The protein is mRNA-capping enzyme regulatory subunit of Vaccinia virus (strain Ankara) (VACV).